A 501-amino-acid chain; its full sequence is Sodium-coupled neutral amino acid symporter 2 (501 aa).

Residues 1–26 (MSSAEMGKFDISPDEDSSSYSSNSND) form a disordered region. At 1–77 (MSSAEMGKFD…HPGTTSFGMS (77 aa)) the chain is on the cytoplasmic side. Positions 1-97 (MSSAEMGKFD…SGILGLSYAM (97 aa)) are regulates protein turnover upon amino acid deprivation. Residues 78–97 (VFNLSNAIVGSGILGLSYAM) form a helical membrane-spanning segment. Na(+) is bound at residue asparagine 83. The Extracellular portion of the chain corresponds to 98 to 103 (ANTGIA). The chain crosses the membrane as a helical span at residues 104 to 124 (LFVILLLVVSILSLYSVHLLL). At 125-159 (KTANEGGSLLYEQLGMKAFGMPGKLAASGSITMQN) the chain is on the cytoplasmic side. A helical membrane pass occupies residues 160–178 (IGAMSSYLFIVKYELPLVI). Topologically, residues 179 to 189 (KTFMNIEENAG) are extracellular. A helical membrane pass occupies residues 190–210 (HWYLNGDYLVLLVSVILILPL). The Cytoplasmic portion of the chain corresponds to 211–218 (SLLKNLGY). The helical transmembrane segment at 219–239 (LGYTSGFSLLCMVFFLIVVIW) threads the bilayer. Over 240-287 (KMFQIPCPMESDIINATLINATLAPFADENITISDACKPEYFIFNSQT) the chain is Extracellular. Cysteine 246 and cysteine 276 are disulfide-bonded. 2 N-linked (GlcNAc...) asparagine glycosylation sites follow: asparagine 254 and asparagine 259. The chain crosses the membrane as a helical span at residues 288 to 308 (VYAVPILTFSFVCHPAILPIY). At 309-324 (EELKSRSRKRMMNVSY) the chain is on the cytoplasmic side. The chain crosses the membrane as a helical span at residues 325–345 (VSFFAMFLMYLLAALFGYLTF). At 346–366 (YGRVESELLHTYSAFLGADIL) the chain is on the extracellular side. A helical membrane pass occupies residues 367–387 (LLIVRLAVLMAVTLTVPVVIF). Threonine 381 is a Na(+) binding site. Residues 388–408 (PIRSSVTQLLWAGKEFSWWRH) lie on the Cytoplasmic side of the membrane. Residues 409 to 429 (CSITVVLLAFTNVLVIFVPTI) traverse the membrane as a helical segment. Residues 430 to 431 (RD) lie on the Extracellular side of the membrane. A helical transmembrane segment spans residues 432-452 (IFGFIGASAAAMLIFILPSAF). Topologically, residues 453–467 (YIKLVKKEPMKSVQK) are cytoplasmic. The helical transmembrane segment at 468 to 490 (IGAALFFLSGILVMTGCMTLIIL) threads the bilayer. At 491–501 (DWIHTDASDGH) the chain is on the extracellular side.

This sequence belongs to the amino acid/polyamine transporter 2 family.

The protein resides in the cell membrane. The enzyme catalyses L-alanine(in) + Na(+)(in) = L-alanine(out) + Na(+)(out). It carries out the reaction glycine(in) + Na(+)(in) = glycine(out) + Na(+)(out). It catalyses the reaction L-serine(in) + Na(+)(in) = L-serine(out) + Na(+)(out). The catalysed reaction is L-proline(in) + Na(+)(in) = L-proline(out) + Na(+)(out). The enzyme catalyses L-methionine(in) + Na(+)(in) = L-methionine(out) + Na(+)(out). It carries out the reaction L-histidine(in) + Na(+)(in) = L-histidine(out) + Na(+)(out). It catalyses the reaction L-asparagine(in) + Na(+)(in) = L-asparagine(out) + Na(+)(out). The catalysed reaction is L-glutamine(in) + Na(+)(in) = L-glutamine(out) + Na(+)(out). The enzyme catalyses L-threonine(in) + Na(+)(in) = L-threonine(out) + Na(+)(out). It carries out the reaction L-leucine(in) + Na(+)(in) = L-leucine(out) + Na(+)(out). It catalyses the reaction L-phenylalanine(in) + Na(+)(in) = L-phenylalanine(out) + Na(+)(out). Inhibited by N-methyl-D-glucamine. Inhibited by choline. Allosteric regulation of sodium ions binding by pH. Its function is as follows. Symporter that cotransports neutral amino acids and sodium ions from the extracellular to the intracellular side of the cell membrane. The transport is pH-sensitive, Li(+)-intolerant, electrogenic, driven by the Na(+) electrochemical gradient and cotransports of neutral amino acids and sodium ions with a stoichiometry of 1:1. The polypeptide is Sodium-coupled neutral amino acid symporter 2 (Gallus gallus (Chicken)).